The sequence spans 146 residues: NADH-quinone oxidoreductase subunit A (146 aa).

Transmembrane regions (helical) follow at residues 14–34 (FALFLIIAIGLCVFMLTGGFL), 68–88 (LVAMFFVIFDVEALYLYAWAV), and 96–116 (IGFIEATIFILVLLAGLIYLV).

The protein belongs to the complex I subunit 3 family. NDH-1 is composed of 13 different subunits. Subunits NuoA, H, J, K, L, M, N constitute the membrane sector of the complex.

The protein localises to the cell inner membrane. It carries out the reaction a quinone + NADH + 5 H(+)(in) = a quinol + NAD(+) + 4 H(+)(out). In terms of biological role, NDH-1 shuttles electrons from NADH, via FMN and iron-sulfur (Fe-S) centers, to quinones in the respiratory chain. The immediate electron acceptor for the enzyme in this species is believed to be ubiquinone. Couples the redox reaction to proton translocation (for every two electrons transferred, four hydrogen ions are translocated across the cytoplasmic membrane), and thus conserves the redox energy in a proton gradient. The polypeptide is NADH-quinone oxidoreductase subunit A (Pectobacterium atrosepticum (strain SCRI 1043 / ATCC BAA-672) (Erwinia carotovora subsp. atroseptica)).